The following is a 313-amino-acid chain: Intelectin-1a (313 aa).

A signal peptide spans 1-18 (MTQLGFLLFIMVATRGCS). Residues 32–251 (SFFSSLPRSC…NNERAASALC (220 aa)) form the Fibrinogen C-terminal domain. The cysteines at positions 41 and 70 are disulfide-linked. Ca(2+) contacts are provided by His-86, Glu-87, Asn-89, Gly-92, Gly-97, Asp-98, and Asp-133. Intrachain disulfides connect Cys-94-Cys-280, Cys-199-Cys-259, and Cys-251-Cys-265. The Ca(2+) site is built by Asn-260, Glu-262, Glu-274, and Asp-282. Residues 262 to 263 (EH) and Glu-274 each bind a carbohydrate. Residue Ser-298 is the site of GPI-anchor amidated serine attachment. The propeptide occupies 299–313 (SSRKITEAAVLLFYR).

As to quaternary structure, monomer. May interact with LTF. Expressed in small intestinal Paneth cells in uninfected mice. Expression also detected in various other tissues including stomach, kidney, ovary and brain.

Its subcellular location is the cell membrane. It is found in the secreted. Functionally, lectin that specifically recognizes microbial carbohydrate chains in a calcium-dependent manner. Binds to microbial glycans that contain a terminal acyclic 1,2-diol moiety, including beta-linked D-galactofuranose (beta-Galf), D-phosphoglycerol-modified glycans, D-glycero-D-talo-oct-2-ulosonic acid (KO) and 3-deoxy-D-manno-oct-2-ulosonic acid (KDO). Binds to glycans from Gram-positive and Gram-negative bacteria, including K.pneumoniae, S.pneumoniae, Y.pestis, P.mirabilis and P.vulgaris. Does not bind mammalian glycans. Probably plays a role in the defense system against microorganisms. May function as adipokine that has no effect on basal glucose uptake but enhances insulin-stimulated glucose uptake in adipocytes. Increases AKT phosphorylation in the absence and presence of insulin. May interact with lactoferrin/LTF and increase its uptake, and may thereby play a role in iron absorption. This Mus musculus (Mouse) protein is Intelectin-1a (Itln1).